Consider the following 429-residue polypeptide: CinA-like protein (429 aa).

It belongs to the CinA family.

In Prochlorococcus marinus (strain MIT 9313), this protein is CinA-like protein.